The sequence spans 315 residues: tRNA-dihydrouridine(16) synthase (315 aa).

FMN contacts are provided by residues 7–9 (PME) and Gln-68. Catalysis depends on Cys-98, which acts as the Proton donor. Residues Lys-139, 199–201 (NGE), and 223–224 (GR) contribute to the FMN site.

It belongs to the Dus family. DusC subfamily. The cofactor is FMN.

It carries out the reaction 5,6-dihydrouridine(16) in tRNA + NADP(+) = uridine(16) in tRNA + NADPH + H(+). The enzyme catalyses 5,6-dihydrouridine(16) in tRNA + NAD(+) = uridine(16) in tRNA + NADH + H(+). Its function is as follows. Catalyzes the synthesis of 5,6-dihydrouridine (D), a modified base found in the D-loop of most tRNAs, via the reduction of the C5-C6 double bond in target uridines. Specifically modifies U16 in tRNAs. This is tRNA-dihydrouridine(16) synthase from Aquipseudomonas alcaligenes (Pseudomonas alcaligenes).